Here is a 601-residue protein sequence, read N- to C-terminus: Glutathione-regulated potassium-efflux system protein KefB (601 aa).

The next 13 helical transmembrane spans lie at 4–24, 29–49, 55–75, 87–107, 115–135, 152–172, 177–197, 207–227, 230–250, 268–288, 291–311, 326–346, and 356–376; these read SDLL…VPLA, IGAV…GLGF, EILH…GLEL, IFGV…GLLM, AAVV…LQLM, VLLF…LLAG, HVNW…LIGG, FIAS…LVLG, LFME…GVLL, GLLL…GVLY, LLWV…VLYL, FAGV…LPAS, and ALLL…MKGI. The region spanning 400 to 519 is the RCK N-terminal domain; that stretch reads KPQVIIVGFG…AGVTQFSRET (120 aa).

The protein belongs to the monovalent cation:proton antiporter 2 (CPA2) transporter (TC 2.A.37) family. KefB subfamily. In terms of assembly, interacts with the regulatory subunit KefG.

It is found in the cell inner membrane. Functionally, pore-forming subunit of a potassium efflux system that confers protection against electrophiles. Catalyzes K(+)/H(+) antiport. The polypeptide is Glutathione-regulated potassium-efflux system protein KefB (Klebsiella pneumoniae (strain 342)).